We begin with the raw amino-acid sequence, 325 residues long: Siroheme decarboxylase NirDL subunit (325 aa).

This sequence belongs to the Ahb/Nir family. As to quaternary structure, forms a complex composed of NirDL, NirG and NirH. All proteins are required for the total conversion of siroheme to didecarboxysiroheme.

The catalysed reaction is siroheme + 2 H(+) = 12,18-didecarboxysiroheme + 2 CO2. It functions in the pathway porphyrin-containing compound metabolism. Its function is as follows. Involved in heme d1 biosynthesis. Catalyzes the decarboxylation of siroheme into didecarboxysiroheme. This chain is Siroheme decarboxylase NirDL subunit, found in Paracoccus denitrificans (strain Pd 1222).